The chain runs to 306 residues: Ribonuclease Z (306 aa).

7 residues coordinate Zn(2+): His63, His65, Asp67, His68, His140, Asp211, and His269. The active-site Proton acceptor is Asp67.

Belongs to the RNase Z family. As to quaternary structure, homodimer. Requires Zn(2+) as cofactor.

It carries out the reaction Endonucleolytic cleavage of RNA, removing extra 3' nucleotides from tRNA precursor, generating 3' termini of tRNAs. A 3'-hydroxy group is left at the tRNA terminus and a 5'-phosphoryl group is left at the trailer molecule.. In terms of biological role, zinc phosphodiesterase, which displays some tRNA 3'-processing endonuclease activity. Probably involved in tRNA maturation, by removing a 3'-trailer from precursor tRNA. This chain is Ribonuclease Z, found in Listeria monocytogenes serotype 4b (strain CLIP80459).